A 259-amino-acid polypeptide reads, in one-letter code: Type III pantothenate kinase (259 aa).

6-13 (DCGNTNTV) is an ATP binding site. 107 to 110 (GPDR) contributes to the substrate binding site. The active-site Proton acceptor is D109. D129 contributes to the K(+) binding site. T132 provides a ligand contact to ATP. Position 184 (T184) interacts with substrate.

This sequence belongs to the type III pantothenate kinase family. In terms of assembly, homodimer. NH4(+) is required as a cofactor. Requires K(+) as cofactor.

It is found in the cytoplasm. It carries out the reaction (R)-pantothenate + ATP = (R)-4'-phosphopantothenate + ADP + H(+). The protein operates within cofactor biosynthesis; coenzyme A biosynthesis; CoA from (R)-pantothenate: step 1/5. Its function is as follows. Catalyzes the phosphorylation of pantothenate (Pan), the first step in CoA biosynthesis. The polypeptide is Type III pantothenate kinase (Jannaschia sp. (strain CCS1)).